Consider the following 526-residue polypeptide: MSPSHAKLATVLLFDVATASADVGGTPSRLTKVARIADLLRRAAPDAALVAIVVSWLSGELRQRQIGVGWAALRSRPPAAAHPTLTVVAVDAAFAEIGAVAGKGAQARRAALLNALFAAATETEQTFLLRLLGGELRQGALAGIMADAVARAAGIPAAAVQRAAMLGGDLPAVAAAALSGEAAALSGEASALDAFTLRVGRPVAPMLAQTAAGVAEAIERHGGQAIFEAKLDGARVQIHRAGDQVTVYTRSLDDVTARLPEVVTATLALPVEALIADGEAIALRPDNSPQRFQVTASRFGRSVDVAAAVAAQPLSVFFFDILHCDGVDLLDAPTTDRLAALDALVPPAQRVDQLLTADPDAAGRFLEATLAAGHEGVMAKAPGAPYQAGRRGAGWLKVKPVHTLDLVVLAVEWGSGRRRGKLSNIHLGARDPATGEFVMVGKTFKGMTDAMLDWQTARFTELAVGGTDGYVVRVRPEQVVEVAVDGVQKSSRYPGGLALRFARVLRYRDDKGPAEADTIDAVRALY.

ATP is bound at residue Glu228. Lys230 (N6-AMP-lysine intermediate) is an active-site residue. Positions 235, 250, 279, 319, 391, and 397 each coordinate ATP.

The protein belongs to the ATP-dependent DNA ligase family. Mg(2+) is required as a cofactor.

It carries out the reaction ATP + (deoxyribonucleotide)n-3'-hydroxyl + 5'-phospho-(deoxyribonucleotide)m = (deoxyribonucleotide)n+m + AMP + diphosphate.. Its function is as follows. DNA ligase that seals nicks in double-stranded DNA during DNA replication, DNA recombination and DNA repair. This chain is Probable DNA ligase, found in Mycobacterium avium (strain 104).